We begin with the raw amino-acid sequence, 383 residues long: MLNFDLLTTDGLARRGRMTLNHGVVETPIFMPVGTYGAVKAMSPVELKDIGAQIILGNTFHLWLRPALEVIDAHKGLHGFVGWDKPMLTDSGGFQVFSLGDLRKITEEGVHFASPINGDRLFLSPEISMQIQRRLNSDIVMQFDECTPYQIDGRPATEAEAAASMRMSLRWAQRSRNEFERERNPNALFGIVQGGMFEPLRDESLAGLQAIDADAGGQGFGGYAIGGLSVGEPKEDMIRVLQHVAPRLPANKPHYLMGVGTPEDLVAGVAAGIDMFDCVMPTRNARNGWLFTRFGDIKIKNAVHRNDPRPLDETCGCYTCRNFSRAYLHHLQRVGEILGARLNTIHNLHYYLELMADMRTAIESHSFAVFRARFAADRARGAL.

Residue Asp-90 is the Proton acceptor of the active site. Residues 90–94 (DSGGF), Asp-144, Gln-193, and Gly-227 each bind substrate. Positions 258-264 (GVGTPED) are RNA binding. Asp-277 (nucleophile) is an active-site residue. Residues 282–286 (TRNAR) are RNA binding; important for wobble base 34 recognition. Residues Cys-315, Cys-317, Cys-320, and His-346 each coordinate Zn(2+).

The protein belongs to the queuine tRNA-ribosyltransferase family. In terms of assembly, homodimer. Within each dimer, one monomer is responsible for RNA recognition and catalysis, while the other monomer binds to the replacement base PreQ1. The cofactor is Zn(2+).

The catalysed reaction is 7-aminomethyl-7-carbaguanine + guanosine(34) in tRNA = 7-aminomethyl-7-carbaguanosine(34) in tRNA + guanine. It participates in tRNA modification; tRNA-queuosine biosynthesis. Functionally, catalyzes the base-exchange of a guanine (G) residue with the queuine precursor 7-aminomethyl-7-deazaguanine (PreQ1) at position 34 (anticodon wobble position) in tRNAs with GU(N) anticodons (tRNA-Asp, -Asn, -His and -Tyr). Catalysis occurs through a double-displacement mechanism. The nucleophile active site attacks the C1' of nucleotide 34 to detach the guanine base from the RNA, forming a covalent enzyme-RNA intermediate. The proton acceptor active site deprotonates the incoming PreQ1, allowing a nucleophilic attack on the C1' of the ribose to form the product. After dissociation, two additional enzymatic reactions on the tRNA convert PreQ1 to queuine (Q), resulting in the hypermodified nucleoside queuosine (7-(((4,5-cis-dihydroxy-2-cyclopenten-1-yl)amino)methyl)-7-deazaguanosine). This is Queuine tRNA-ribosyltransferase from Ralstonia nicotianae (strain ATCC BAA-1114 / GMI1000) (Ralstonia solanacearum).